We begin with the raw amino-acid sequence, 131 residues long: Profilin-A (131 aa).

Belongs to the profilin family. Occurs in many kinds of cells as a complex with monomeric actin in a 1:1 ratio.

The protein resides in the cytoplasm. The protein localises to the cytoskeleton. Binds to actin and affects the structure of the cytoskeleton. At high concentrations, profilin prevents the polymerization of actin, whereas it enhances it at low concentrations. By binding to PIP2, it inhibits the formation of IP3 and DG. May serve as a modulator in pollen germination and pollen tube growth. The polypeptide is Profilin-A (Oryza sativa subsp. japonica (Rice)).